Reading from the N-terminus, the 257-residue chain is Phycoerythrobilin:ferredoxin oxidoreductase (257 aa).

This sequence belongs to the HY2 family.

The enzyme catalyses (3Z)-phycoerythrobilin + oxidized 2[4Fe-4S]-[ferredoxin] = 15,16-dihydrobiliverdin + reduced 2[4Fe-4S]-[ferredoxin] + 2 H(+). Its function is as follows. Catalyzes the two-electron reduction of the C2 and C3(1) diene system of 15,16-dihydrobiliverdin. This chain is Phycoerythrobilin:ferredoxin oxidoreductase, found in Synechococcus sp. (strain CC9902).